The chain runs to 607 residues: Protein PLASTID MOVEMENT IMPAIRED 2 (607 aa).

Coiled coils occupy residues 66-295 (KAKK…NAEL) and 329-445 (MLER…ESRR).

The protein belongs to the WEB family. As to quaternary structure, interacts with WEB1. As to expression, ubiquitous but preferentially in chloroplast-containing tissues.

The protein localises to the cytoplasm. Required for the chloroplast avoidance response under high intensity blue light. This avoidance response consists in the relocation of chloroplasts on the anticlinal side of exposed cells. Acts in association with WEB1 to maintain the velocity of chloroplast photorelocation movement via cp-actin filaments regulation. The sequence is that of Protein PLASTID MOVEMENT IMPAIRED 2 (PMI2) from Arabidopsis thaliana (Mouse-ear cress).